The following is a 1370-amino-acid chain: DNA-directed RNA polymerase subunit beta (1370 aa).

It belongs to the RNA polymerase beta chain family. The RNAP catalytic core consists of 2 alpha, 1 beta, 1 beta' and 1 omega subunit. When a sigma factor is associated with the core the holoenzyme is formed, which can initiate transcription.

It carries out the reaction RNA(n) + a ribonucleoside 5'-triphosphate = RNA(n+1) + diphosphate. In terms of biological role, DNA-dependent RNA polymerase catalyzes the transcription of DNA into RNA using the four ribonucleoside triphosphates as substrates. This Verminephrobacter eiseniae (strain EF01-2) protein is DNA-directed RNA polymerase subunit beta.